The primary structure comprises 267 residues: Dichloromethane dehalogenase (267 aa).

The region spanning 3-85 (TKLRYLHHPA…YLSEKYDCSS (83 aa)) is the GST N-terminal domain. One can recognise a GST C-terminal domain in the interval 91-224 (TLEERGHIQQ…AWQYENVRKY (134 aa)).

Belongs to the GST superfamily. As to quaternary structure, homohexamer.

It is found in the cytoplasm. It carries out the reaction dichloromethane + H2O = formaldehyde + 2 chloride + 2 H(+). Its pathway is xenobiotic degradation; dichloromethane degradation. This chain is Dichloromethane dehalogenase (dcmA), found in Methylophilus leisingeri (strain DSM 6813 / VKM B-2013 / DM11).